The chain runs to 209 residues: Large ribosomal subunit protein uL3 (209 aa).

At Q150 the chain carries N5-methylglutamine.

Belongs to the universal ribosomal protein uL3 family. In terms of assembly, part of the 50S ribosomal subunit. Forms a cluster with proteins L14 and L19. Post-translationally, methylated by PrmB.

Functionally, one of the primary rRNA binding proteins, it binds directly near the 3'-end of the 23S rRNA, where it nucleates assembly of the 50S subunit. The protein is Large ribosomal subunit protein uL3 of Vibrio cholerae serotype O1 (strain ATCC 39541 / Classical Ogawa 395 / O395).